The following is a 309-amino-acid chain: Olfactory receptor 5H17 (309 aa).

At 1–28 (MEKKNETLWTEFVLTGLTCLPQWKPLLF) the chain is on the extracellular side. Residue Asn-5 is glycosylated (N-linked (GlcNAc...) asparagine). Residues 29–49 (LVFLVIYFMTIVGNLGLITLI) traverse the membrane as a helical segment. The Cytoplasmic segment spans residues 50-56 (WNDPHLH). Residues 57 to 77 (IPMYLFLSNLAFVDTWLSSTV) traverse the membrane as a helical segment. Over 78–93 (TPRMLFNLLDKGKVIS) the chain is Extracellular. A helical membrane pass occupies residues 94-114 (VAECKTQFFSFAISVTTECFL). Cys-97 and Cys-189 are oxidised to a cystine. At 115–144 (LAAMAYDRYAAICNPLLYPVIMTNRLCVRL) the chain is on the cytoplasmic side. Residues 145–165 (LALSFIGGFLHAVIHESFLSR) form a helical membrane-spanning segment. Residues 166–198 (LTFCNSNIIYHFYCDVIPLLKISCTDPSLNYLI) are Extracellular-facing. A helical membrane pass occupies residues 199-219 (IFIFSGSIQVFTIMTVLISYT). The Cytoplasmic segment spans residues 220–239 (FVLFTILKKKSDKGIRKAFS). A helical membrane pass occupies residues 240–260 (TCGAHLLSVSLYYGPLLFMYV). Residues 261–271 (HPASSEVDDQD) lie on the Extracellular side of the membrane. The chain crosses the membrane as a helical span at residues 272 to 292 (MILSLFYTVIIPVLNPIIYSL). Residues 293-309 (RNKQVIDSLKKMLKMMV) lie on the Cytoplasmic side of the membrane.

Belongs to the G-protein coupled receptor 1 family.

The protein resides in the cell membrane. Its function is as follows. Potential odorant receptor. This Mus musculus (Mouse) protein is Olfactory receptor 5H17.